Consider the following 331-residue polypeptide: 6-phosphogluconolactonase (331 aa).

K287 is subject to N6-acetyllysine.

Belongs to the cycloisomerase 2 family.

It carries out the reaction 6-phospho-D-glucono-1,5-lactone + H2O = 6-phospho-D-gluconate + H(+). It functions in the pathway carbohydrate degradation; pentose phosphate pathway; D-ribulose 5-phosphate from D-glucose 6-phosphate (oxidative stage): step 2/3. Its function is as follows. Catalyzes the hydrolysis of 6-phosphogluconolactone to 6-phosphogluconate. The chain is 6-phosphogluconolactonase from Escherichia coli O157:H7.